The sequence spans 356 residues: MPISLNPSHSNTQTFKVAAVQAEPVWLDLQGGVEKTIRIINEAAAEGAKIIGFPEVFIPGYPWTPWANNFVDAQVVLKKYQANSMPLHSPEMDRIREAVKEADVNIVLGFSERDGSSLYIAQVTITSDGKIANHRRKIKPTHYEKTIFGDGSAQSIYNVVQTPYGRLGSLNCWEHIQPWLKTHFYSQYPQIFVGGWWPAFPPHTGGSPYIVSGEASSRMSQLVSMEGGLFGIVCCHVVSEAGARKMRMLGFPWFTFPGGGFSVIYGPDGAALTDPVDPGKEVVLYANISLDKIDDVKLVADIMGNYSRFDLFHTTVVNGKNWKPVAYGDPDEQAASKAQQAEIDNAGKGSIVPSKL.

In terms of domain architecture, CN hydrolase spans 15–290; the sequence is FKVAAVQAEP…EVVLYANISL (276 aa). Residue Glu55 is the Proton acceptor of the active site. Lys137 is a catalytic residue. Cys172 functions as the Nucleophile in the catalytic mechanism. The tract at residues 331–356 is disordered; sequence DEQAASKAQQAEIDNAGKGSIVPSKL.

The protein belongs to the carbon-nitrogen hydrolase superfamily. Nitrilase family.

The enzyme catalyses formamide = hydrogen cyanide + H2O. Functionally, catalyzes the hydration of cyanide to formamide. Degradation of cyanide may be important for plant pathogenic fungi in infection of cyanogenic plants. This Armillaria gallica (Bulbous honey fungus) protein is Cyanide hydratase.